A 370-amino-acid polypeptide reads, in one-letter code: Queuine tRNA-ribosyltransferase (370 aa).

Asp-89 acts as the Proton acceptor in catalysis. Substrate contacts are provided by residues 89–93 (DSGGF), Asp-143, and Gly-214. Positions 245–251 (GVGKPED) are RNA binding. Asp-264 acts as the Nucleophile in catalysis. Residues 269-273 (TRNAR) are RNA binding; important for wobble base 34 recognition. The Zn(2+) site is built by Cys-302, Cys-304, Cys-307, and His-333.

Belongs to the queuine tRNA-ribosyltransferase family. As to quaternary structure, homodimer. Within each dimer, one monomer is responsible for RNA recognition and catalysis, while the other monomer binds to the replacement base PreQ1. Requires Zn(2+) as cofactor.

The enzyme catalyses 7-aminomethyl-7-carbaguanine + guanosine(34) in tRNA = 7-aminomethyl-7-carbaguanosine(34) in tRNA + guanine. It participates in tRNA modification; tRNA-queuosine biosynthesis. Its function is as follows. Catalyzes the base-exchange of a guanine (G) residue with the queuine precursor 7-aminomethyl-7-deazaguanine (PreQ1) at position 34 (anticodon wobble position) in tRNAs with GU(N) anticodons (tRNA-Asp, -Asn, -His and -Tyr). Catalysis occurs through a double-displacement mechanism. The nucleophile active site attacks the C1' of nucleotide 34 to detach the guanine base from the RNA, forming a covalent enzyme-RNA intermediate. The proton acceptor active site deprotonates the incoming PreQ1, allowing a nucleophilic attack on the C1' of the ribose to form the product. After dissociation, two additional enzymatic reactions on the tRNA convert PreQ1 to queuine (Q), resulting in the hypermodified nucleoside queuosine (7-(((4,5-cis-dihydroxy-2-cyclopenten-1-yl)amino)methyl)-7-deazaguanosine). This chain is Queuine tRNA-ribosyltransferase, found in Buchnera aphidicola subsp. Acyrthosiphon pisum (strain 5A).